Here is a 117-residue protein sequence, read N- to C-terminus: MTRIRRGYIARRRRTKIRLFASSFRGARSRLTRTIIQQKIRSLVSSHRDRDRKKIDFRRLWITRINAVIRGNRVSYSYSRLIHNLYKRQLLLNRKILAQIAILNRNCLYMISNEIRS.

It belongs to the bacterial ribosomal protein bL20 family.

The protein localises to the plastid. It is found in the chloroplast. In terms of biological role, binds directly to 23S ribosomal RNA and is necessary for the in vitro assembly process of the 50S ribosomal subunit. It is not involved in the protein synthesizing functions of that subunit. This Eucalyptus globulus subsp. globulus (Tasmanian blue gum) protein is Large ribosomal subunit protein bL20c.